A 1086-amino-acid chain; its full sequence is Selenocysteine insertion sequence-binding protein 2-like (1086 aa).

Disordered stretches follow at residues 155–207, 243–386, 615–657, 880–904, and 919–1086; these read GQAF…GPDS, AKGR…SESL, QEDA…SPMA, SDGL…KPSR, and AAGS…PQST. Residues 193–206 are compositionally biased toward polar residues; it reads NVATQKETSATGPD. Serine 276 is modified (phosphoserine). Polar residues-rich tracts occupy residues 294 to 303 and 328 to 344; these read GTMNRLESSG and QAFS…NNLQ. A compositionally biased stretch (basic and acidic residues) spans 355–370; the sequence is SSERRQNLQKRQDNKH. The segment covering 624–657 has biased composition (polar residues); that stretch reads SDASLSPASQNSPYCMTPVSQGSPASSGIGSPMA. Polar residues predominate over residues 922 to 931; the sequence is SITSAPSQGK. Positions 933-943 are enriched in basic and acidic residues; the sequence is TGDKDELKPDD. Positions 947 to 957 are enriched in polar residues; the sequence is ASQQSTETGSL. The segment covering 981-994 has biased composition (acidic residues); it reads LEEEEDEEEEEEDY. Residues 1004-1022 show a composition bias toward polar residues; it reads QLNSRIESWVSETQRTMET. Positions 1032–1046 are enriched in acidic residues; the sequence is SEEDSAEQSGEEAAE.

Functionally, binds SECIS (Sec insertion sequence) elements present on selenocysteine (Sec) protein mRNAs, but does not promote Sec incorporation into selenoproteins. The sequence is that of Selenocysteine insertion sequence-binding protein 2-like (Secisbp2l) from Mus musculus (Mouse).